A 737-amino-acid chain; its full sequence is Pentatricopeptide repeat-containing protein At3g49740 (737 aa).

PPR repeat units follow at residues 20–55 (TLLNLNRRLTGLTRSGENRNALKLFADVHRCTTLRP), 56–90 (DQYSVSLAITTARHLRDTIFGGQVHCYAIRSGLLC), 91–121 (HSHVSNTLLSLYERLGNLASLKKKFDEIDEP), 122–152 (DVYSWTTLLSASFKLGDIEYAFEVFDKMPER), 154–188 (DVAIWNAMITGCKESGYHETSVELFREMHKLGVRH), 189–222 (DKFGFATILSMCDYGSLDFGKQVHSLVIKAGFFI), 223–253 (ASSVVNALITMYFNCQVVVDACLVFEETDVA), 256–289 (DQVTFNVVIDGLAGFKRDESLLVFRKMLEASLRP), 290–321 (TDLTFVSVMGSCSCAAMGHQVHGLAIKTGYEK), 322–352 (YTLVSNATMTMYSSFEDFGAAHKVFESLEEK), 353–387 (DLVTWNTMISSYNQAKLGKSAMSVYKRMHIIGVKP), 388–418 (DEFTFGSLLATSLDLDVLEMVQACIIKFGLS), 420–454 (KIEISNALISAYSKNGQIEKADLLFERSLRKNLIS), 455–485 (WNAIISGFYHNGFPFEGLERFSCLLESEVRI), 488–522 (DAYTLSTLLSICVSTSSLMLGSQTHAYVLRHGQFK), 523–553 (ETLIGNALINMYSQCGTIQNSLEVFNQMSEK), 554–588 (DVVSWNSLISAYSRHGEGENAVNTYKTMQDEGKVI), 590–620 (DAATFSAVLSACSHAGLVEEGLEIFNSMVEF), and 626–656 (NVDHFSCLVDLLGRAGHLDEAESLVKISEKT). A type E motif; degenerate region spans residues 663–737 (VWWALFSACA…KQRGCSWMRL (75 aa)).

It belongs to the PPR family. PCMP-E subfamily.

In Arabidopsis thaliana (Mouse-ear cress), this protein is Pentatricopeptide repeat-containing protein At3g49740 (PCMP-E84).